Here is a 670-residue protein sequence, read N- to C-terminus: DNA ligase (670 aa).

Residues 32–36 (DAEYD), 81–82 (SL), and Glu113 contribute to the NAD(+) site. Residue Lys115 is the N6-AMP-lysine intermediate of the active site. Positions 136, 173, 290, and 314 each coordinate NAD(+). Residues Cys408, Cys411, Cys426, and Cys432 each contribute to the Zn(2+) site. The region spanning 592-670 (EIDSPFAGKT…EAEMIRLLGE (79 aa)) is the BRCT domain.

This sequence belongs to the NAD-dependent DNA ligase family. LigA subfamily. Mg(2+) is required as a cofactor. Requires Mn(2+) as cofactor.

The catalysed reaction is NAD(+) + (deoxyribonucleotide)n-3'-hydroxyl + 5'-phospho-(deoxyribonucleotide)m = (deoxyribonucleotide)n+m + AMP + beta-nicotinamide D-nucleotide.. In terms of biological role, DNA ligase that catalyzes the formation of phosphodiester linkages between 5'-phosphoryl and 3'-hydroxyl groups in double-stranded DNA using NAD as a coenzyme and as the energy source for the reaction. It is essential for DNA replication and repair of damaged DNA. This chain is DNA ligase, found in Yersinia pseudotuberculosis serotype IB (strain PB1/+).